A 296-amino-acid chain; its full sequence is UBX domain-containing protein 1-A (296 aa).

A UBA domain is found at 1 to 42 (MAECSTLESLIEMGFSSTRAEKALTATGNQGIEPAMDWLVEH). The disordered stretch occupies residues 43–216 (EDDPDIDEPS…VQEPPTKKEY (174 aa)). Residues 61–75 (TDTADTTDTTDTTDT) show a composition bias toward low complexity. Basic and acidic residues-rich tracts occupy residues 86 to 100 (PLTE…KRMM), 107 to 123 (QNER…EQEK), and 138 to 178 (KMQE…DRAR). Residues 87–177 (LTEEEKEKQT…KIARDKADRA (91 aa)) adopt a coiled-coil conformation. Over residues 191-206 (PAETSIPATTPSPSSP) the composition is skewed to low complexity. The UBX domain maps to 214 to 293 (KEYDQCRIQV…GLVPTAVLIV (80 aa)).

The protein resides in the cytoplasm. In terms of biological role, component of a complex required to couple deglycosylation and proteasome-mediated degradation of misfolded proteins in the endoplasmic reticulum that are retrotranslocated in the cytosol. Involved in ubiquitin-proteasome systems. This chain is UBX domain-containing protein 1-A (ubxn1-a), found in Xenopus laevis (African clawed frog).